The following is a 204-amino-acid chain: uncharacterized protein (204 aa).

This is an uncharacterized protein from Dictyostelium discoideum (Social amoeba).